Consider the following 203-residue polypeptide: A-type ATP synthase subunit E (203 aa).

The protein belongs to the V-ATPase E subunit family. As to quaternary structure, has multiple subunits with at least A(3), B(3), C, D, E, F, H, I and proteolipid K(x).

It is found in the cell membrane. Component of the A-type ATP synthase that produces ATP from ADP in the presence of a proton gradient across the membrane. The chain is A-type ATP synthase subunit E from Methanococcus maripaludis (strain C7 / ATCC BAA-1331).